A 504-amino-acid polypeptide reads, in one-letter code: Cytochrome P450 3A11 (504 aa).

Cys-443 is a heme binding site.

It belongs to the cytochrome P450 family. It depends on heme as a cofactor. Highly expressed in liver.

The protein localises to the endoplasmic reticulum membrane. The protein resides in the microsome membrane. The enzyme catalyses an organic molecule + reduced [NADPH--hemoprotein reductase] + O2 = an alcohol + oxidized [NADPH--hemoprotein reductase] + H2O + H(+). In terms of biological role, catalyzes erythromycin N-demethylation, nifedipine oxidation and testosterone 6 beta-hydroxylation. The chain is Cytochrome P450 3A11 (Cyp3a11) from Mus musculus (Mouse).